We begin with the raw amino-acid sequence, 95 residues long: Large ribosomal subunit protein uL23 (95 aa).

It belongs to the universal ribosomal protein uL23 family. In terms of assembly, part of the 50S ribosomal subunit. Contacts protein L29.

Functionally, binds to 23S rRNA. One of the proteins that surrounds the polypeptide exit tunnel on the outside of the ribosome. This chain is Large ribosomal subunit protein uL23, found in Methanopyrus kandleri (strain AV19 / DSM 6324 / JCM 9639 / NBRC 100938).